Reading from the N-terminus, the 500-residue chain is Transcription termination/antitermination protein NusA (500 aa).

Positions 135–205 constitute an S1 motif domain; sequence GEIVTGVVKK…RGAQLFVTRS (71 aa). The region spanning 307–373 is the KH domain; the sequence is KHTMDIAVEA…FTKYLDIDEE (67 aa). 2 tandem repeats follow at residues 369–419 and 444–494. The tract at residues 369 to 494 is 2 X 51 AA approximate repeats; it reads DIDEEFATVL…ELIMAARNIC (126 aa).

This sequence belongs to the NusA family. In terms of assembly, monomer. Binds directly to the core enzyme of the DNA-dependent RNA polymerase and to nascent RNA.

Its subcellular location is the cytoplasm. In terms of biological role, participates in both transcription termination and antitermination. The protein is Transcription termination/antitermination protein NusA of Salmonella typhimurium (strain LT2 / SGSC1412 / ATCC 700720).